The sequence spans 1259 residues: Ankyrin repeat and sterile alpha motif domain-containing protein 1B (1259 aa).

7 ANK repeats span residues 2–31 (GKDQ…GGIL), 58–87 (SGYT…STNV), 91–120 (KGYF…SHSR), 127–156 (ENET…DPTI), 160–189 (KLET…NLMS), 193–222 (RKHT…DVSC), and 225–254 (EKGS…DANI). A disordered region spans residues 298 to 325 (HAQEDTAQETHLSSPAESPQKTKSETVT). The segment covering 306–325 (ETHLSSPAESPQKTKSETVT) has biased composition (polar residues). Residues Ser310, Ser311, Ser315, Ser353, and Ser364 each carry the phosphoserine modification. Disordered regions lie at residues 367–401 (ELGK…SCGP), 490–513 (PGTS…SPDT), 556–614 (CTSF…GSSP), and 631–661 (TCED…EPSV). Residues 371–384 (NGSQSVRTSSTINL) show a composition bias toward polar residues. Position 503 is a phosphothreonine (Thr503). Phosphoserine occurs at positions 507 and 510. Residues 556-574 (CTSFTSSPAASPPTSSVET) show a composition bias toward low complexity. The span at 575–587 (TEVKNEGAEHADD) shows a compositional bias: basic and acidic residues. Ser738 is modified (phosphoserine). Positions 753 to 776 (VNWSKSSTAERSSKDNSERTPSFT) are disordered. Position 772 is a phosphothreonine (Thr772). Ser774 is subject to Phosphoserine. 2 SAM domains span residues 809–875 (CPVQ…LPKM) and 883–948 (YHPT…RLHD). Tyr900 carries the post-translational modification Phosphotyrosine. Residue His934 is a short sequence motif, nuclear localization signal. The tract at residues 943 to 988 (GDRLHDDPPQKPPRSITLREPSGNHTPPQLSPSLSQSTYTTGGSLD) is disordered. Residues 968 to 983 (TPPQLSPSLSQSTYTT) show a composition bias toward low complexity. Residue Ser973 is modified to Phosphoserine. Position 1006 is a phosphotyrosine (Tyr1006). The region spanning 1055–1212 (IFQSCDYKAF…SFENKPSKPI (158 aa)) is the PID domain. A disordered region spans residues 1196–1216 (HSSTLPESFENKPSKPIPKPR).

In terms of assembly, interacts with EPHA8. Isoform 2 interacts with COIL.

The protein resides in the cytoplasm. Its subcellular location is the nucleus. The protein localises to the postsynaptic density. It localises to the cell projection. It is found in the dendritic spine. Its function is as follows. Isoform 2 may participate in the regulation of nucleoplasmic coilin protein interactions in neuronal and transformed cells. This is Ankyrin repeat and sterile alpha motif domain-containing protein 1B (Anks1b) from Mus musculus (Mouse).